We begin with the raw amino-acid sequence, 249 residues long: MSEKKTTHFGFQQVPVEEKAQRVAEVFHSVAAKYDLMNDLMSGGIHRLWKRFTIEASGVRTGHKVLDIAGGTGDLSYQFARLVGSSGQVILADINASMLGVGRDRLIDRGIAGNIAFTQCDAQYLPFPDNTFDCITIAFGLRNVTDKDLALRAMQRVLKPGGRLLVLEFSKPHNELLSKAYDTYSFRILPFMGKLVTNDADSYRYLAESIRMHPDQQTLKGMMDDAGFVNTEFHNMTGGIVALHKGIKP.

S-adenosyl-L-methionine contacts are provided by residues T72, D93, and 121 to 122; that span reads DA.

Belongs to the class I-like SAM-binding methyltransferase superfamily. MenG/UbiE family.

It carries out the reaction a 2-demethylmenaquinol + S-adenosyl-L-methionine = a menaquinol + S-adenosyl-L-homocysteine + H(+). It catalyses the reaction a 2-methoxy-6-(all-trans-polyprenyl)benzene-1,4-diol + S-adenosyl-L-methionine = a 5-methoxy-2-methyl-3-(all-trans-polyprenyl)benzene-1,4-diol + S-adenosyl-L-homocysteine + H(+). It participates in quinol/quinone metabolism; menaquinone biosynthesis; menaquinol from 1,4-dihydroxy-2-naphthoate: step 2/2. It functions in the pathway cofactor biosynthesis; ubiquinone biosynthesis. Methyltransferase required for the conversion of demethylmenaquinol (DMKH2) to menaquinol (MKH2) and the conversion of 2-polyprenyl-6-methoxy-1,4-benzoquinol (DDMQH2) to 2-polyprenyl-3-methyl-6-methoxy-1,4-benzoquinol (DMQH2). The polypeptide is Ubiquinone/menaquinone biosynthesis C-methyltransferase UbiE (Cellvibrio japonicus (strain Ueda107) (Pseudomonas fluorescens subsp. cellulosa)).